We begin with the raw amino-acid sequence, 336 residues long: Probable G-protein coupled receptor 82 (336 aa).

Residues 1 to 11 (MNNNTTCIQPS) lie on the Extracellular side of the membrane. N-linked (GlcNAc...) asparagine glycosylation is found at Asn-3 and Asn-4. Residues 12 to 32 (MISSMALPIIYILLCIVGVFG) traverse the membrane as a helical segment. At 33–55 (NTLSQWIFLTKIGKKTSTHIYLS) the chain is on the cytoplasmic side. The chain crosses the membrane as a helical span at residues 56–76 (HLVTANLLVCSAMPFMSIYFL). At 77–92 (KGFQWEYQSAQCRVVN) the chain is on the extracellular side. A helical membrane pass occupies residues 93–115 (FLGTLSMHASMFVSLLILSWIAI). Residues 116–156 (SRYATLMQKDSSQETTSCYEKIFYGHLLKKFRQPNFARKLC) are Cytoplasmic-facing. A helical transmembrane segment spans residues 157 to 177 (IYIWGVVLGIIIPVTVYYSVI). Residues 178–197 (EATEGEESLCYNRQMELGAM) lie on the Extracellular side of the membrane. A helical membrane pass occupies residues 198 to 218 (ISQIAGLIGTTFIGFSFLVVL). Residues 219-251 (TSYYSFVSHLRKIRTCTSIMEKDLTYSSVKRHL) are Cytoplasmic-facing. Residues 252–272 (LVIQILLIVCFLPYSIFKPIF) traverse the membrane as a helical segment. The Extracellular segment spans residues 273–336 (YVLHQRDNCQ…SNSAHMQSYG (64 aa)).

This sequence belongs to the G-protein coupled receptor 1 family.

It localises to the cell membrane. Functionally, orphan receptor. The chain is Probable G-protein coupled receptor 82 (GPR82) from Homo sapiens (Human).